A 316-amino-acid polypeptide reads, in one-letter code: Biotin synthase (316 aa).

Positions Asn36–Ala260 constitute a Radical SAM core domain. Residues Cys51, Cys55, and Cys58 each contribute to the [4Fe-4S] cluster site. 4 residues coordinate [2Fe-2S] cluster: Cys95, Cys126, Cys186, and Arg258.

The protein belongs to the radical SAM superfamily. Biotin synthase family. Homodimer. [4Fe-4S] cluster serves as cofactor. Requires [2Fe-2S] cluster as cofactor.

It catalyses the reaction (4R,5S)-dethiobiotin + (sulfur carrier)-SH + 2 reduced [2Fe-2S]-[ferredoxin] + 2 S-adenosyl-L-methionine = (sulfur carrier)-H + biotin + 2 5'-deoxyadenosine + 2 L-methionine + 2 oxidized [2Fe-2S]-[ferredoxin]. It functions in the pathway cofactor biosynthesis; biotin biosynthesis; biotin from 7,8-diaminononanoate: step 2/2. In terms of biological role, catalyzes the conversion of dethiobiotin (DTB) to biotin by the insertion of a sulfur atom into dethiobiotin via a radical-based mechanism. The protein is Biotin synthase of Lawsonia intracellularis (strain PHE/MN1-00).